The sequence spans 423 residues: D-tagatose-1,6-bisphosphate aldolase subunit GatZ (423 aa).

This sequence belongs to the GatZ/KbaZ family. GatZ subfamily. In terms of assembly, forms a complex with GatY.

The protein operates within carbohydrate metabolism; D-tagatose 6-phosphate degradation; D-glyceraldehyde 3-phosphate and glycerone phosphate from D-tagatose 6-phosphate: step 2/2. In terms of biological role, component of the tagatose-1,6-bisphosphate aldolase GatYZ that is required for full activity and stability of the Y subunit. Could have a chaperone-like function for the proper and stable folding of GatY. When expressed alone, GatZ does not show any aldolase activity. Is involved in the catabolism of galactitol. This chain is D-tagatose-1,6-bisphosphate aldolase subunit GatZ, found in Salmonella dublin (strain CT_02021853).